Consider the following 77-residue polypeptide: uncharacterized protein (77 aa).

Disordered stretches follow at residues 1–34 and 56–77; these read MSRA…TKMN and LDGD…FSGR. Over residues 8–20 the composition is skewed to basic and acidic residues; sequence DNDKGWAKKKGAD. The segment covering 25 to 34 has biased composition (basic residues); the sequence is PRPHKQTKMN. Basic and acidic residues predominate over residues 56 to 70; it reads LDGDIRRGGNKKSER.

This is an uncharacterized protein from Dictyostelium discoideum (Social amoeba).